The following is an 876-amino-acid chain: Alanine--tRNA ligase (876 aa).

4 residues coordinate Zn(2+): H566, H570, C668, and H672.

This sequence belongs to the class-II aminoacyl-tRNA synthetase family. The cofactor is Zn(2+).

Its subcellular location is the cytoplasm. It carries out the reaction tRNA(Ala) + L-alanine + ATP = L-alanyl-tRNA(Ala) + AMP + diphosphate. Functionally, catalyzes the attachment of alanine to tRNA(Ala) in a two-step reaction: alanine is first activated by ATP to form Ala-AMP and then transferred to the acceptor end of tRNA(Ala). Also edits incorrectly charged Ser-tRNA(Ala) and Gly-tRNA(Ala) via its editing domain. The protein is Alanine--tRNA ligase of Petrotoga mobilis (strain DSM 10674 / SJ95).